Reading from the N-terminus, the 411-residue chain is Translation initiation factor 2 subunit gamma (411 aa).

Residues 9-203 form the tr-type G domain; the sequence is QAEVNIGMVG…AIQDFIPTPK (195 aa). Positions 18–25 are G1; sequence GHVDHGKT. Aspartate 21, threonine 25, glycine 46, and serine 48 together coordinate Mg(2+). Residue 21-26 coordinates GTP; that stretch reads DHGKTS. Residues 46–50 are G2; it reads GISIR. Cysteine 61, cysteine 64, cysteine 73, and cysteine 76 together coordinate Zn(2+). Positions 90–93 are G3; sequence DSPG. GTP-binding positions include 146–149 and 181–183; these read NKID and SAH. The interval 146–149 is G4; it reads NKID. The segment at 181 to 183 is G5; the sequence is SAH.

Belongs to the TRAFAC class translation factor GTPase superfamily. Classic translation factor GTPase family. EIF2G subfamily. As to quaternary structure, heterotrimer composed of an alpha, a beta and a gamma chain. Mg(2+) serves as cofactor.

It catalyses the reaction GTP + H2O = GDP + phosphate + H(+). In terms of biological role, eIF-2 functions in the early steps of protein synthesis by forming a ternary complex with GTP and initiator tRNA. The sequence is that of Translation initiation factor 2 subunit gamma from Methanocaldococcus jannaschii (strain ATCC 43067 / DSM 2661 / JAL-1 / JCM 10045 / NBRC 100440) (Methanococcus jannaschii).